A 282-amino-acid polypeptide reads, in one-letter code: Armadillo repeat-containing protein 1 (282 aa).

Residue Met-1 is modified to N-acetylmethionine. Residues Gly-39–Gly-81 form an ARM repeat. Thr-137 carries the post-translational modification Phosphothreonine. A phosphoserine mark is found at Ser-189, Ser-246, Ser-260, and Ser-267. Residues Asp-239–His-261 form a disordered region. Basic and acidic residues predominate over residues Ser-246–Val-255.

As to quaternary structure, interacts with mitochondrial contact site and cristae organizing system (MICOS) complex components IMMT/MIC60 and MICOS10/MIC10. Interacts with mitochondrial outer membrane sorting assembly machinery (SAM) complex components SAMM50 and MTX1.

It is found in the cytoplasm. Its subcellular location is the mitochondrion. The protein localises to the mitochondrion outer membrane. Functionally, in association with mitochondrial contact site and cristae organizing system (MICOS) complex components and mitochondrial outer membrane sorting assembly machinery (SAM) complex components may regulate mitochondrial dynamics playing a role in determining mitochondrial length, distribution and motility. This is Armadillo repeat-containing protein 1 (ARMC1) from Bos taurus (Bovine).